Consider the following 643-residue polypeptide: Protein tramtrack, beta isoform (643 aa).

One can recognise a BTB domain in the interval 33 to 98 (TDVTLAVEGQ…MYRGEVSVDQ (66 aa)). 2 disordered regions span residues 118–148 (EVND…PQLQ) and 171–300 (ANAG…GLDT). Residue Lys123 forms a Glycyl lysine isopeptide (Lys-Gly) (interchain with G-Cter in ubiquitin) linkage. Over residues 125 to 145 (SPAAAAAGAGATGSESTATTP) the composition is skewed to low complexity. Polar residues predominate over residues 176–187 (TPTLPVQPSLLS). A compositionally biased stretch (basic residues) spans 192-201 (PKRKRGRPRK). A Glycyl lysine isopeptide (Lys-Gly) (interchain with G-Cter in ubiquitin) cross-link involves residue Lys201. Basic and acidic residues predominate over residues 254 to 285 (HTDDLNESRDSLPSKRSKNSKDHRVVSHHEDN). Residues Lys355, Lys397, Lys418, Lys457, Lys478, and Lys480 each participate in a glycyl lysine isopeptide (Lys-Gly) (interchain with G-Cter in ubiquitin) cross-link. C2H2-type zinc fingers lie at residues 508–531 (YRCK…VTSH) and 538–561 (YPCP…KIIH). Lys545 participates in a covalent cross-link: Glycyl lysine isopeptide (Lys-Gly) (interchain with G-Cter in ubiquitin). The disordered stretch occupies residues 584-643 (GVSGASTPPPPDLSGQNSNQSLPATSNALSTSSSSSTSSSSGSLGPLTTSAPPAPAAAAQ). The segment covering 604 to 643 (SLPATSNALSTSSSSSTSSSSGSLGPLTTSAPPAPAAAAQ) has biased composition (low complexity).

In terms of assembly, can form homodimers. Interacts with Trl in vivo via the BTB domain. Interacts with phyl. Interacts with Usp47. Polyubiquitinated by sina. Polyubiquitin linkage is mainly through 'Lys-48', but linkage through 'Lys-63' also occurs. Deubiquitination by Usp47 leads to its stabilization.

It localises to the nucleus. Functionally, binds to a number of sites in the transcriptional regulatory region of ftz. Isoform beta is required to repress inappropriate segmentation gene transcription and repress genes incompatible with development of photoreceptor cell fates. Probable repressor of the transcription of the segmentation genes ftz, eve, h, odd, run, and en. Inhibits Trl-dependent activation of eve. May bind to the region AGGGC/TGG. Degradation of ttk is directed by binding of sinah or sina, via the adapter molecule phyl which binds to the BTB domain of ttk. A second method of degradation exists that is phyl-independent, this is mediated by recognition of motifs in the C-terminus of ttk. The chain is Protein tramtrack, beta isoform (ttk) from Drosophila melanogaster (Fruit fly).